Here is a 561-residue protein sequence, read N- to C-terminus: Septation ring formation regulator EzrA (561 aa).

Over 1–3 (MWI) the chain is Extracellular. The helical transmembrane segment at 4–22 (VVFSLLVLTVTFFVYGALR) threads the bilayer. At 23–561 (RKAFYKRVDK…VLEKVQHLAG (539 aa)) the chain is on the cytoplasmic side. Coiled-coil stretches lie at residues 98–130 (RFQKAKALLDTIEQRLHSIEEQLKIMVDDIQVL), 166–214 (AKVF…HLLK), and 251–465 (FAID…KLSD).

Belongs to the EzrA family.

It localises to the cell membrane. In terms of biological role, negative regulator of FtsZ ring formation; modulates the frequency and position of FtsZ ring formation. Inhibits FtsZ ring formation at polar sites. Interacts either with FtsZ or with one of its binding partners to promote depolymerization. In Halalkalibacterium halodurans (strain ATCC BAA-125 / DSM 18197 / FERM 7344 / JCM 9153 / C-125) (Bacillus halodurans), this protein is Septation ring formation regulator EzrA.